A 358-amino-acid chain; its full sequence is Alanine racemase (358 aa).

Lys-35 (proton acceptor; specific for D-alanine) is an active-site residue. Lys-35 carries the N6-(pyridoxal phosphate)lysine modification. Arg-130 serves as a coordination point for substrate. Tyr-255 functions as the Proton acceptor; specific for L-alanine in the catalytic mechanism. Met-303 contributes to the substrate binding site.

The protein belongs to the alanine racemase family. It depends on pyridoxal 5'-phosphate as a cofactor.

The catalysed reaction is L-alanine = D-alanine. It participates in amino-acid biosynthesis; D-alanine biosynthesis; D-alanine from L-alanine: step 1/1. Catalyzes the interconversion of L-alanine and D-alanine. May also act on other amino acids. The protein is Alanine racemase (alr) of Shewanella baltica (strain OS185).